The following is a 560-amino-acid chain: Potassium-transporting ATPase potassium-binding subunit (560 aa).

A run of 12 helical transmembrane segments spans residues 6–26 (FLLIASFLLVLMALAKPLGSL), 63–83 (LLAILLFNTLGLVLLFAILMC), 132–152 (GLAVQNFLSAATGIAVAFALI), 175–195 (LWVLMPISLIIALFFIQQGAI), 250–270 (LTNVVQMLAIFLIPAALCFAF), 282–302 (AILWTMTVIFVVCVALVMWAE), 327–347 (FGILASSLFAVVTTAASCGAV), 356–376 (ALGGMIPMWLMQIGEVVFGGV), 379–399 (GLYGMLLFVLLGVFIAGLMIG), 416–436 (MTALAILVTPALVLLGTALAM), 483–503 (LLLAFCMWFGRFLVIIPVMAI), and 524–544 (GALFIGLLTGTVLLVGALTFI).

The protein belongs to the KdpA family. As to quaternary structure, the system is composed of three essential subunits: KdpA, KdpB and KdpC.

Its subcellular location is the cell inner membrane. Part of the high-affinity ATP-driven potassium transport (or Kdp) system, which catalyzes the hydrolysis of ATP coupled with the electrogenic transport of potassium into the cytoplasm. This subunit binds the periplasmic potassium ions and delivers the ions to the membrane domain of KdpB through an intramembrane tunnel. The chain is Potassium-transporting ATPase potassium-binding subunit from Cronobacter sakazakii (strain ATCC BAA-894) (Enterobacter sakazakii).